The chain runs to 286 residues: Deleted in azoospermia-like (286 aa).

In terms of domain architecture, RRM spans 30–105; it reads NTVFVGGIDI…KKLKLGPAIR (76 aa). In terms of domain architecture, DAZ spans 155 to 180; sequence ACPYPSSPPMAIQQIPVGCQQPSYFQ.

This sequence belongs to the RRM DAZ family. Interacts with the C-terminus of pabp1 and with epabp. Prior to oocyte maturation, found in a complex with epabp and pum2 proteins and spdy1 mRNA; pum2 dissociates from the complex during maturation. As to expression, germ-line specific; expressed in adult testis and ovary. Localized specifically to the oocyte and embryonic germ plasm and to migrating primordial germ cells (PGCs).

The protein resides in the cytoplasm. In terms of biological role, RNA-binding protein that is required for primordial germ cell (PGC) differentiation and indirectly necessary for the migration of PGCs through the endoderm. May promote meiotic cell division during spermatogenesis. Shows a preference for G- and U-rich RNAs and probably binds the 3'-UTR of target mRNAs. Stimulates the initiation of translation of mRNAs through the recruitment of poly(A)-binding proteins (PABPs). In Xenopus tropicalis (Western clawed frog), this protein is Deleted in azoospermia-like.